A 792-amino-acid chain; its full sequence is Phenylalanine--tRNA ligase beta subunit (792 aa).

A tRNA-binding domain is found at 39–147 (GESLGQVVVA…DDAPVGQALA (109 aa)). One can recognise a B5 domain in the interval 400–475 (PQPVHIRLRR…RIHGYDRVPT (76 aa)). Mg(2+)-binding residues include Asp453, Asp459, Glu462, and Glu463. The 94-residue stretch at 698–791 (SRFPSVRRDL…IEREHRARIR (94 aa)) folds into the FDX-ACB domain.

It belongs to the phenylalanyl-tRNA synthetase beta subunit family. Type 1 subfamily. Tetramer of two alpha and two beta subunits. Requires Mg(2+) as cofactor.

The protein localises to the cytoplasm. It carries out the reaction tRNA(Phe) + L-phenylalanine + ATP = L-phenylalanyl-tRNA(Phe) + AMP + diphosphate + H(+). The sequence is that of Phenylalanine--tRNA ligase beta subunit from Xanthomonas axonopodis pv. citri (strain 306).